A 572-amino-acid polypeptide reads, in one-letter code: uncharacterized protein (572 aa).

The interval 553–572 is disordered; it reads PSPAPKPVTVRKKKGNSPIS. A compositionally biased stretch (basic residues) spans 561–572; sequence TVRKKKGNSPIS.

This is an uncharacterized protein from Homo sapiens (Human).